The chain runs to 184 residues: Large ribosomal subunit protein uL6 (184 aa).

This sequence belongs to the universal ribosomal protein uL6 family. As to quaternary structure, part of the 50S ribosomal subunit.

In terms of biological role, this protein binds to the 23S rRNA, and is important in its secondary structure. It is located near the subunit interface in the base of the L7/L12 stalk, and near the tRNA binding site of the peptidyltransferase center. This Amoebophilus asiaticus (strain 5a2) protein is Large ribosomal subunit protein uL6.